Consider the following 302-residue polypeptide: Sulfate adenylyltransferase subunit 2 (302 aa).

This sequence belongs to the PAPS reductase family. CysD subfamily. In terms of assembly, heterodimer composed of CysD, the smaller subunit, and CysN.

It catalyses the reaction sulfate + ATP + H(+) = adenosine 5'-phosphosulfate + diphosphate. It functions in the pathway sulfur metabolism; hydrogen sulfide biosynthesis; sulfite from sulfate: step 1/3. Functionally, with CysN forms the ATP sulfurylase (ATPS) that catalyzes the adenylation of sulfate producing adenosine 5'-phosphosulfate (APS) and diphosphate, the first enzymatic step in sulfur assimilation pathway. APS synthesis involves the formation of a high-energy phosphoric-sulfuric acid anhydride bond driven by GTP hydrolysis by CysN coupled to ATP hydrolysis by CysD. The sequence is that of Sulfate adenylyltransferase subunit 2 from Xanthomonas campestris pv. campestris (strain 8004).